The following is a 461-amino-acid chain: Cysteine--tRNA ligase (461 aa).

Zn(2+) is bound at residue Cys29. A 'HIGH' region motif is present at residues 31-41 (MTVYDFCHIGH). Zn(2+)-binding residues include Cys210, His235, and Glu239. A 'KMSKS' region motif is present at residues 267-271 (KMSKS). Lys270 is a binding site for ATP.

It belongs to the class-I aminoacyl-tRNA synthetase family. As to quaternary structure, monomer. Requires Zn(2+) as cofactor.

It localises to the cytoplasm. It catalyses the reaction tRNA(Cys) + L-cysteine + ATP = L-cysteinyl-tRNA(Cys) + AMP + diphosphate. This Ectopseudomonas mendocina (strain ymp) (Pseudomonas mendocina) protein is Cysteine--tRNA ligase.